A 223-amino-acid polypeptide reads, in one-letter code: Pre-mRNA-splicing factor SPF27 (223 aa).

A coiled-coil region spans residues Asn139–Tyr223.

This sequence belongs to the SPF27 family. As to quaternary structure, component of the pre-catalytic and catalytic spliceosome complexes. Component of the postcatalytic spliceosome P complex.

It localises to the nucleus. Required for pre-mRNA splicing as component of the activated spliceosome. May have a scaffolding role in the spliceosome assembly as it contacts all other components of the core complex. In Xenopus tropicalis (Western clawed frog), this protein is Pre-mRNA-splicing factor SPF27 (bcas2).